The following is a 513-amino-acid chain: ATP synthase subunit alpha (513 aa).

Gly-169–Thr-176 lines the ATP pocket.

This sequence belongs to the ATPase alpha/beta chains family. As to quaternary structure, F-type ATPases have 2 components, CF(1) - the catalytic core - and CF(0) - the membrane proton channel. CF(1) has five subunits: alpha(3), beta(3), gamma(1), delta(1), epsilon(1). CF(0) has three main subunits: a(1), b(2) and c(9-12). The alpha and beta chains form an alternating ring which encloses part of the gamma chain. CF(1) is attached to CF(0) by a central stalk formed by the gamma and epsilon chains, while a peripheral stalk is formed by the delta and b chains.

It is found in the cell membrane. The catalysed reaction is ATP + H2O + 4 H(+)(in) = ADP + phosphate + 5 H(+)(out). Functionally, produces ATP from ADP in the presence of a proton gradient across the membrane. The alpha chain is a regulatory subunit. This chain is ATP synthase subunit alpha, found in Polynucleobacter asymbioticus (strain DSM 18221 / CIP 109841 / QLW-P1DMWA-1) (Polynucleobacter necessarius subsp. asymbioticus).